Consider the following 340-residue polypeptide: Thylakoidal processing peptidase 1, chloroplastic (340 aa).

Residues 1–52 (MAIRITFTYSTHVARNLVGTRVGPGGYCFESLVRPRFFSHKRDFDRSPRNRP) constitute a chloroplast transit peptide. The chain crosses the membrane as a helical span at residues 155–175 (EDAKAAFTAVTVSILFRSALA). At 176–340 (EPKSIPSTSM…AITRGPVAVS (165 aa)) the chain is on the lumenal, thylakoid side. Residue S184 is part of the active site.

It belongs to the peptidase S26 family.

The protein resides in the plastid. The protein localises to the chloroplast thylakoid membrane. It catalyses the reaction Cleavage of hydrophobic, N-terminal signal or leader sequences from secreted and periplasmic proteins.. Its function is as follows. Cleaves the thylakoid-transfer domain from a chloroplast protein. The chain is Thylakoidal processing peptidase 1, chloroplastic (TPP1) from Arabidopsis thaliana (Mouse-ear cress).